Reading from the N-terminus, the 187-residue chain is Adenylate kinase (187 aa).

10-15 (GSGKGT) contacts ATP. The tract at residues 30–59 (STGDLLRAEVAAGSPLGLKAKEVMARGDLV) is NMP. AMP-binding positions include Thr-31, Arg-36, 57 to 59 (DLV), 85 to 88 (GYPR), and Gln-92. The interval 126 to 136 (GRAKAEGREDD) is LID. Arg-127 contacts ATP. Residues Arg-133 and Arg-144 each contribute to the AMP site. Gly-172 contacts ATP.

This sequence belongs to the adenylate kinase family. In terms of assembly, monomer.

The protein localises to the cytoplasm. The enzyme catalyses AMP + ATP = 2 ADP. It functions in the pathway purine metabolism; AMP biosynthesis via salvage pathway; AMP from ADP: step 1/1. Catalyzes the reversible transfer of the terminal phosphate group between ATP and AMP. Plays an important role in cellular energy homeostasis and in adenine nucleotide metabolism. This is Adenylate kinase from Xanthomonas oryzae pv. oryzae (strain MAFF 311018).